Reading from the N-terminus, the 149-residue chain is Large ribosomal subunit protein bL9 (149 aa).

Belongs to the bacterial ribosomal protein bL9 family.

In terms of biological role, binds to the 23S rRNA. The chain is Large ribosomal subunit protein bL9 from Cutibacterium acnes (strain DSM 16379 / KPA171202) (Propionibacterium acnes).